We begin with the raw amino-acid sequence, 270 residues long: Undecaprenyl-diphosphatase 1 (270 aa).

Transmembrane regions (helical) follow at residues 79–99 (NLLLGIVIAFIPAAVAGLLFS), 105–125 (VLFNPVCVAIAFIVGGLIILW), 155–175 (LALIPGTSRSGATIIGGLFLG), 182–202 (TEFSFFLGIPTLGAASLYSLI), 215–235 (VFAVGFIASFVFAFLAIRALL), and 242–262 (SFAVFAWYRIAFGLIVLGTWW).

It belongs to the UppP family.

Its subcellular location is the cell inner membrane. The catalysed reaction is di-trans,octa-cis-undecaprenyl diphosphate + H2O = di-trans,octa-cis-undecaprenyl phosphate + phosphate + H(+). Catalyzes the dephosphorylation of undecaprenyl diphosphate (UPP). Confers resistance to bacitracin. The protein is Undecaprenyl-diphosphatase 1 of Chromobacterium violaceum (strain ATCC 12472 / DSM 30191 / JCM 1249 / CCUG 213 / NBRC 12614 / NCIMB 9131 / NCTC 9757 / MK).